The sequence spans 72 residues: Galensin (72 aa).

The N-terminal stretch at 1–22 is a signal peptide; the sequence is MLTLKKSMLLLFFLGLVSVSLA. A propeptide spanning residues 23-48 is cleaved from the precursor; it reads DDKREDEAEEGEDKRAAEEERNVEKR. Phe-71 is modified (phenylalanine amide).

Belongs to the frog skin active peptide (FSAP) family. Brevinin subfamily. Homodimer; disulfide-linked. As to expression, expressed by the skin glands.

The protein localises to the secreted. Its function is as follows. Antibacterial activity against the Gram-positive bacterium M.luteus and the Gram-negative bacterium E.coli. This chain is Galensin, found in Kassina senegalensis (Senegal running frog).